The following is a 190-amino-acid chain: Xanthine phosphoribosyltransferase (190 aa).

The xanthine site is built by leucine 20 and asparagine 27. 129 to 133 (ASGSA) contacts 5-phospho-alpha-D-ribose 1-diphosphate. Lysine 157 serves as a coordination point for xanthine.

Belongs to the purine/pyrimidine phosphoribosyltransferase family. Xpt subfamily. In terms of assembly, homodimer.

The protein localises to the cytoplasm. The enzyme catalyses XMP + diphosphate = xanthine + 5-phospho-alpha-D-ribose 1-diphosphate. Its pathway is purine metabolism; XMP biosynthesis via salvage pathway; XMP from xanthine: step 1/1. Converts the preformed base xanthine, a product of nucleic acid breakdown, to xanthosine 5'-monophosphate (XMP), so it can be reused for RNA or DNA synthesis. This chain is Xanthine phosphoribosyltransferase, found in Clostridium tetani (strain Massachusetts / E88).